Reading from the N-terminus, the 689-residue chain is FAST kinase domain-containing protein 2, mitochondrial (689 aa).

2 positions are modified to phosphoserine: S113 and S126. Residues 617 to 674 (VAVLCVPKSVYCLNSCHPRGLMAMKIRHLNVMGFHVILIHNWELKKLKMEDAVTFVRK) enclose the RAP domain.

It belongs to the FAST kinase family. In terms of assembly, monomer. Found in a complex with GRSF1, DDX28, DHX30 and FASTKD5. Associates with the 16S mitochondrial rRNA (16S mt-rRNA). Forms a regulatory protein-RNA complex, consisting of RCC1L, NGRN, RPUSD3, RPUSD4, TRUB2, FASTKD2 and 16S mt-rRNA. Ubiquitously expressed. Expression detected in spleen, testis, colon, heart, smooth muscle, kidney, brain, lung, liver, brown and white adipose tissue with highest expression in testis, heart and smooth muscle.

The protein resides in the mitochondrion matrix. It localises to the mitochondrion nucleoid. Its function is as follows. Plays an important role in assembly of the mitochondrial large ribosomal subunit. As a component of a functional protein-RNA module, consisting of RCC1L, NGRN, RPUSD3, RPUSD4, TRUB2, FASTKD2 and 16S mitochondrial ribosomal RNA (16S mt-rRNA), controls 16S mt-rRNA abundance and is required for intra-mitochondrial translation. May play a role in mitochondrial apoptosis. The protein is FAST kinase domain-containing protein 2, mitochondrial (Fastkd2) of Mus musculus (Mouse).